A 148-amino-acid chain; its full sequence is Snaclec jerdonuxin subunit beta (148 aa).

An N-terminal signal peptide occupies residues 1–23 (MVRFIFVSFGLLVVFLSLSGIGA). 3 disulfide bridges follow: cysteine 27–cysteine 38, cysteine 55–cysteine 144, and cysteine 121–cysteine 136. The C-type lectin domain maps to 34–145 (YDEHCYQVFQ…CSSKRYIVCK (112 aa)).

The protein belongs to the snaclec family. In terms of assembly, tetramer of 4 heterodimers of alpha and beta subunits; disulfide-linked. Expressed by the venom gland.

Its subcellular location is the secreted. Functionally, snaclec that strongly induces platelet aggregation, in a dose-dependent manner. The chain is Snaclec jerdonuxin subunit beta from Protobothrops jerdonii (Jerdon's pitviper).